Consider the following 333-residue polypeptide: GTPase Obg (333 aa).

Residues 1 to 159 (MKFIDEATIT…ATVRLELKLL (159 aa)) form the Obg domain. The disordered stretch occupies residues 63 to 85 (KQFAAPNGAPGEGRQKTGKSGDD). Over residues 75–84 (GRQKTGKSGD) the composition is skewed to basic and acidic residues. An OBG-type G domain is found at 160–329 (ADVGLIGLPN…LKKHLFELLC (170 aa)). Residues 166-173 (GLPNAGKS), 191-195 (FTTLS), 213-216 (DIPG), 283-286 (NKMD), and 310-312 (SAA) each bind GTP. Residues Ser173 and Thr193 each coordinate Mg(2+).

The protein belongs to the TRAFAC class OBG-HflX-like GTPase superfamily. OBG GTPase family. As to quaternary structure, monomer. It depends on Mg(2+) as a cofactor.

The protein resides in the cytoplasm. In terms of biological role, an essential GTPase which binds GTP, GDP and possibly (p)ppGpp with moderate affinity, with high nucleotide exchange rates and a fairly low GTP hydrolysis rate. Plays a role in control of the cell cycle, stress response, ribosome biogenesis and in those bacteria that undergo differentiation, in morphogenesis control. This is GTPase Obg from Desulfosudis oleivorans (strain DSM 6200 / JCM 39069 / Hxd3) (Desulfococcus oleovorans).